A 278-amino-acid chain; its full sequence is ABC transporter I family member 11, chloroplastic (278 aa).

Residues 1–49 (MAVSTFSSPTPVFGIAEPPASFSSTAIGWKQPLRFRRTKKPRVISCDYS) constitute a chloroplast transit peptide. An ABC transporter domain is found at 51–278 (IEVRDVCYRP…GVLVAERPPL (228 aa)). 85 to 92 (GKSGSGKT) is a binding site for ATP.

It belongs to the ABC transporter superfamily. ABCI family.

It localises to the plastid. The protein resides in the chloroplast. This Arabidopsis thaliana (Mouse-ear cress) protein is ABC transporter I family member 11, chloroplastic (ABCI11).